The following is a 665-amino-acid chain: Protein-arginine deiminase type-2 (665 aa).

Asp-123, Asp-125, Asp-127, Glu-131, Asn-154, Asp-156, Asp-158, Asp-166, Asp-169, Lys-171, Asp-177, Asp-180, Glu-354, Asp-389, Phe-408, Leu-411, and Glu-412 together coordinate Ca(2+). Catalysis depends on Cys-647, which acts as the Nucleophile.

This sequence belongs to the protein arginine deiminase family. As to quaternary structure, homodimer. It depends on Ca(2+) as a cofactor. In terms of tissue distribution, spinal cord, submaxillary gland, cerebrum, cerebellum, and skeletal muscle.

The protein localises to the cytoplasm. The enzyme catalyses L-arginyl-[protein] + H2O = L-citrullyl-[protein] + NH4(+). Its function is as follows. Catalyzes the deimination of arginine residues of proteins. In Rattus norvegicus (Rat), this protein is Protein-arginine deiminase type-2 (Padi2).